The following is a 204-amino-acid chain: Small ribosomal subunit protein uS4 (204 aa).

Residues 1 to 46 form a disordered region; it reads MSKRHSSKYKIDRRMGENIWGRPKSPVNRREYGPGQHGQRRRSKIS. In terms of domain architecture, S4 RNA-binding spans 94-157; it reads RRLDMIVYRA…QEMALVLEAQ (64 aa).

This sequence belongs to the universal ribosomal protein uS4 family. In terms of assembly, part of the 30S ribosomal subunit. Contacts protein S5. The interaction surface between S4 and S5 is involved in control of translational fidelity.

Its function is as follows. One of the primary rRNA binding proteins, it binds directly to 16S rRNA where it nucleates assembly of the body of the 30S subunit. Functionally, with S5 and S12 plays an important role in translational accuracy. The protein is Small ribosomal subunit protein uS4 of Zymomonas mobilis subsp. mobilis (strain ATCC 31821 / ZM4 / CP4).